The following is a 148-amino-acid chain: Extracellular globin-2B (148 aa).

One can recognise a Globin domain in the interval 3-148 (CCSAADRHEV…IADVIKAELP (146 aa)). C4 and C135 are oxidised to a cystine. Heme b is bound at residue H98.

Belongs to the globin family. As to quaternary structure, disulfide bonded trimer of chains IIA, IIB, and IIC.

It localises to the secreted. The chain is Extracellular globin-2B from Tylorrhynchus heterochetus (Japanese palolo worm).